We begin with the raw amino-acid sequence, 97 residues long: Acylphosphatase (97 aa).

The Acylphosphatase-like domain maps to 3–97 (KVKMIVSGRV…PDFTDFNIKY (95 aa)). Active-site residues include Arg-18 and Asn-36.

The protein belongs to the acylphosphatase family.

The enzyme catalyses an acyl phosphate + H2O = a carboxylate + phosphate + H(+). This is Acylphosphatase (acyP) from Lactococcus lactis subsp. lactis (strain IL1403) (Streptococcus lactis).